The following is an 89-amino-acid chain: Small ribosomal subunit protein uS15 (89 aa).

It belongs to the universal ribosomal protein uS15 family. Part of the 30S ribosomal subunit. Forms a bridge to the 50S subunit in the 70S ribosome, contacting the 23S rRNA.

Its function is as follows. One of the primary rRNA binding proteins, it binds directly to 16S rRNA where it helps nucleate assembly of the platform of the 30S subunit by binding and bridging several RNA helices of the 16S rRNA. In terms of biological role, forms an intersubunit bridge (bridge B4) with the 23S rRNA of the 50S subunit in the ribosome. This chain is Small ribosomal subunit protein uS15, found in Shewanella woodyi (strain ATCC 51908 / MS32).